Consider the following 151-residue polypeptide: UPF0178 protein amb2838 (151 aa).

This sequence belongs to the UPF0178 family.

The chain is UPF0178 protein amb2838 from Paramagnetospirillum magneticum (strain ATCC 700264 / AMB-1) (Magnetospirillum magneticum).